A 463-amino-acid polypeptide reads, in one-letter code: ATP synthase subunit beta (463 aa).

Residue 153 to 160 (GGAGVGKT) coordinates ATP.

It belongs to the ATPase alpha/beta chains family. In terms of assembly, F-type ATPases have 2 components, CF(1) - the catalytic core - and CF(0) - the membrane proton channel. CF(1) has five subunits: alpha(3), beta(3), gamma(1), delta(1), epsilon(1). CF(0) has three main subunits: a(1), b(2) and c(9-12). The alpha and beta chains form an alternating ring which encloses part of the gamma chain. CF(1) is attached to CF(0) by a central stalk formed by the gamma and epsilon chains, while a peripheral stalk is formed by the delta and b chains.

The protein localises to the cell inner membrane. The enzyme catalyses ATP + H2O + 4 H(+)(in) = ADP + phosphate + 5 H(+)(out). Functionally, produces ATP from ADP in the presence of a proton gradient across the membrane. The catalytic sites are hosted primarily by the beta subunits. This chain is ATP synthase subunit beta, found in Burkholderia cepacia (Pseudomonas cepacia).